A 302-amino-acid chain; its full sequence is Pseudouridine-5'-phosphate glycosidase (302 aa).

Glu25 (proton donor) is an active-site residue. Substrate is bound by residues Lys86 and Val106. Asp138 provides a ligand contact to Mn(2+). Residue 140 to 142 (SAD) coordinates substrate. Lys159 functions as the Nucleophile in the catalytic mechanism.

Belongs to the pseudouridine-5'-phosphate glycosidase family. Homotrimer. It depends on Mn(2+) as a cofactor.

The catalysed reaction is D-ribose 5-phosphate + uracil = psi-UMP + H2O. Functionally, catalyzes the reversible cleavage of pseudouridine 5'-phosphate (PsiMP) to ribose 5-phosphate and uracil. Functions biologically in the cleavage direction, as part of a pseudouridine degradation pathway. The protein is Pseudouridine-5'-phosphate glycosidase of Jannaschia sp. (strain CCS1).